The chain runs to 236 residues: MQPTEISPGLVVNVATPDLKLSDFKLIAFDMDSTLINIECVDEIADAAGRKAEVAAITEAAMRGEISDYKESLRQRVALLKGVSVASMDEVYRTRLRLNPGAARLVQACKDAGLKVLLVSGGFTFFTDRIRDELGIDYTRSNVLETTDGLLTGRMVDQPWGDICDGEEKRKMLLETCGQLGISPRQAIAMGDGANDLPMMGEAGLSVAYHAKPRVREQAMVAINEGGLDRLLELVK.

The active-site Nucleophile is Asp30. Mg(2+) is bound by residues Asp30 and Asp32. Asp32 serves as the catalytic Proton donor. Substrate-binding positions include Glu39, Arg76, 120-121, and Lys169; that span reads SG. Asp192 lines the Mg(2+) pocket. A substrate-binding site is contributed by Asn195.

This sequence belongs to the HAD-like hydrolase superfamily. SerB family. It depends on Mg(2+) as a cofactor.

The catalysed reaction is O-phospho-L-serine + H2O = L-serine + phosphate. It catalyses the reaction O-phospho-D-serine + H2O = D-serine + phosphate. It functions in the pathway amino-acid biosynthesis; L-serine biosynthesis; L-serine from 3-phospho-D-glycerate: step 3/3. The sequence is that of Phosphoserine phosphatase from Polaromonas sp. (strain JS666 / ATCC BAA-500).